We begin with the raw amino-acid sequence, 424 residues long: CinA-like protein (424 aa).

Belongs to the CinA family.

The chain is CinA-like protein from Prochlorococcus marinus (strain MIT 9215).